The primary structure comprises 226 residues: Orotate phosphoribosyltransferase (226 aa).

5-phospho-alpha-D-ribose 1-diphosphate contacts are provided by residues R107, K108, K111, and 133–141; that span reads EDLTTDGGS. T137 is a binding site for orotate.

This sequence belongs to the purine/pyrimidine phosphoribosyltransferase family. PyrE subfamily. In terms of assembly, homodimer. Mg(2+) serves as cofactor.

It carries out the reaction orotidine 5'-phosphate + diphosphate = orotate + 5-phospho-alpha-D-ribose 1-diphosphate. Its pathway is pyrimidine metabolism; UMP biosynthesis via de novo pathway; UMP from orotate: step 1/2. In terms of biological role, catalyzes the transfer of a ribosyl phosphate group from 5-phosphoribose 1-diphosphate to orotate, leading to the formation of orotidine monophosphate (OMP). This Ruegeria sp. (strain TM1040) (Silicibacter sp.) protein is Orotate phosphoribosyltransferase.